The chain runs to 274 residues: Large ribosomal subunit protein uL2 (274 aa).

The segment at 224–256 (VMNPVDHPHGGGEGKTGEGRHPVDPWGNLTKGY) is disordered. Over residues 229-246 (DHPHGGGEGKTGEGRHPV) the composition is skewed to basic and acidic residues.

This sequence belongs to the universal ribosomal protein uL2 family. In terms of assembly, part of the 50S ribosomal subunit. Forms a bridge to the 30S subunit in the 70S ribosome.

Functionally, one of the primary rRNA binding proteins. Required for association of the 30S and 50S subunits to form the 70S ribosome, for tRNA binding and peptide bond formation. It has been suggested to have peptidyltransferase activity; this is somewhat controversial. Makes several contacts with the 16S rRNA in the 70S ribosome. This Polaromonas naphthalenivorans (strain CJ2) protein is Large ribosomal subunit protein uL2.